The chain runs to 395 residues: Cyclin-A2 (395 aa).

Positions 1-93 are disordered; it reads MLAEQENQEN…EEAADAPGLR (93 aa). The segment covering 27-60 has biased composition (low complexity); it reads ALGLLRGGPARPGPAAQAARNGEGRGAAAGQQQQ.

The protein belongs to the cyclin family. Cyclin AB subfamily. As to quaternary structure, interacts with the CDK1 and CDK2 protein kinases to form serine/threonine kinase holoenzyme complexes.

The protein localises to the nucleus. Its subcellular location is the cytoplasm. In terms of biological role, cyclin which controls both the G1/S and the G2/M transition phases of the cell cycle. Functions through the formation of specific serine/threonine kinase holoenzyme complexes with the cyclin-dependent protein kinases CDK1 and CDK2. The cyclin subunit confers the substrate specificity of these complexes and differentially interacts with and activates CDK1 and CDK2 throughout the cell cycle. The polypeptide is Cyclin-A2 (Gallus gallus (Chicken)).